The primary structure comprises 218 residues: Mediator of RNA polymerase II transcription subunit 20 (218 aa).

The protein belongs to the Mediator complex subunit 20 family. As to quaternary structure, component of the Mediator complex.

Its subcellular location is the nucleus. Component of the Mediator complex, a coactivator involved in the regulated transcription of nearly all RNA polymerase II-dependent genes. Mediator functions as a bridge to convey information from gene-specific regulatory proteins to the basal RNA polymerase II transcription machinery. Mediator is recruited to promoters by direct interactions with regulatory proteins and serves as a scaffold for the assembly of a functional preinitiation complex with RNA polymerase II and the general transcription factors. This is Mediator of RNA polymerase II transcription subunit 20 (MED20) from Anopheles gambiae (African malaria mosquito).